The sequence spans 484 residues: Bifunctional protein HldE (484 aa).

The ribokinase stretch occupies residues methionine 1–alanine 320. Asparagine 195–glutamate 198 serves as a coordination point for ATP. Aspartate 265 is a catalytic residue. Residues phenylalanine 349 to arginine 484 form a cytidylyltransferase region.

In the N-terminal section; belongs to the carbohydrate kinase PfkB family. The protein in the C-terminal section; belongs to the cytidylyltransferase family. As to quaternary structure, homodimer.

It catalyses the reaction D-glycero-beta-D-manno-heptose 7-phosphate + ATP = D-glycero-beta-D-manno-heptose 1,7-bisphosphate + ADP + H(+). It carries out the reaction D-glycero-beta-D-manno-heptose 1-phosphate + ATP + H(+) = ADP-D-glycero-beta-D-manno-heptose + diphosphate. It functions in the pathway nucleotide-sugar biosynthesis; ADP-L-glycero-beta-D-manno-heptose biosynthesis; ADP-L-glycero-beta-D-manno-heptose from D-glycero-beta-D-manno-heptose 7-phosphate: step 1/4. It participates in nucleotide-sugar biosynthesis; ADP-L-glycero-beta-D-manno-heptose biosynthesis; ADP-L-glycero-beta-D-manno-heptose from D-glycero-beta-D-manno-heptose 7-phosphate: step 3/4. Catalyzes the phosphorylation of D-glycero-D-manno-heptose 7-phosphate at the C-1 position to selectively form D-glycero-beta-D-manno-heptose-1,7-bisphosphate. In terms of biological role, catalyzes the ADP transfer from ATP to D-glycero-beta-D-manno-heptose 1-phosphate, yielding ADP-D-glycero-beta-D-manno-heptose. The chain is Bifunctional protein HldE from Gluconacetobacter diazotrophicus (strain ATCC 49037 / DSM 5601 / CCUG 37298 / CIP 103539 / LMG 7603 / PAl5).